The primary structure comprises 161 residues: Inner membrane assembly complex subunit 17 (161 aa).

Residues 1–22 (MLNPRPCVPRLLSAVARCHKPY) constitute a mitochondrion transit peptide. Topologically, residues 23–84 (STSIKSLEDL…QQQQQALKKF (62 aa)) are mitochondrial matrix. The helical transmembrane segment at 85–107 (VRPMWIFLLMSSFFYLTGHYIWW) threads the bilayer. The Mitochondrial intermembrane segment spans residues 108-161 (KLEYDEREIELHKQVQALRQELDSAIAAKHSGKEPALSGAGAKKPKRWYLAWLW). The stretch at 109–138 (LEYDEREIELHKQVQALRQELDSAIAAKHS) forms a coiled coil.

This sequence belongs to the INA17 family. As to quaternary structure, component of the inner membrane assembly (INA) complex, composed of INA17 and INA22. Interacts with a subset of F(1)F(0)-ATP synthase subunits of the F(1)-domain and the peripheral stalk.

Its subcellular location is the mitochondrion inner membrane. Functionally, component of the INA complex (INAC) that promotes the biogenesis of mitochondrial F(1)F(0)-ATP synthase. INAC facilitates the assembly of the peripheral stalk and promotes the assembly of the catalytic F(1)-domain with the membrane-embedded F(0)-domain. This Lachancea thermotolerans (strain ATCC 56472 / CBS 6340 / NRRL Y-8284) (Yeast) protein is Inner membrane assembly complex subunit 17.